A 216-amino-acid chain; its full sequence is Redox-sensing transcriptional repressor Rex (216 aa).

Residues 15–54 (KYLRVTQQLIEEGRDAVSSKELGDFTGINPVQVRRDLNAI) constitute a DNA-binding region (H-T-H motif). 89-94 (GAGNLG) is a binding site for NAD(+).

The protein belongs to the transcriptional regulatory Rex family. As to quaternary structure, homodimer.

It localises to the cytoplasm. Its function is as follows. Modulates transcription in response to changes in cellular NADH/NAD(+) redox state. In Rubrobacter xylanophilus (strain DSM 9941 / JCM 11954 / NBRC 16129 / PRD-1), this protein is Redox-sensing transcriptional repressor Rex.